Here is a 125-residue protein sequence, read N- to C-terminus: Holo-[acyl-carrier-protein] synthase (125 aa).

2 residues coordinate Mg(2+): aspartate 8 and glutamate 57.

The protein belongs to the P-Pant transferase superfamily. AcpS family. Requires Mg(2+) as cofactor.

The protein resides in the cytoplasm. It catalyses the reaction apo-[ACP] + CoA = holo-[ACP] + adenosine 3',5'-bisphosphate + H(+). Its function is as follows. Transfers the 4'-phosphopantetheine moiety from coenzyme A to a Ser of acyl-carrier-protein. The polypeptide is Holo-[acyl-carrier-protein] synthase (Dechloromonas aromatica (strain RCB)).